The following is a 399-amino-acid chain: MADRVVLAYSGGLDTSVAISWIGKETGAEVVAVAIDLGQGGEDMEVVRQRAIDCGAVESVVVDARDEFADEYCLPTIAANALYMDRYPLVSAISRPLIVKHIVEAARSHGGTIVSHGCTGKGNDQVRFEVGFGALAPDLQVIAPVRDYAWTREKAIAFAEENNIPINVSKKSPFSIDQNVWGRAVETGFLEDLWNAPTKDVYDYTQDPTVNWNAPDELIISFDKGRPVAIDGRPVSVLEAIQELNKRAGAQGVGRLDVVEDRLVGIKSREIYEAPGAMVLITAHQELEHVTLERELGRYKRQMEQRWSELVYDGLWFSPLKDALDTFVNKTQERVTGDIRLFLHGGAITVNGRRSPESLYDFNLATYDEGDSFDQSASKGFVEIHGLSSKVAAKRDLGL.

ATP is bound at residue 8–16; it reads AYSGGLDTS. Tyr-87 serves as a coordination point for L-citrulline. ATP is bound at residue Gly-117. L-aspartate is bound by residues Thr-119, Asn-123, and Asp-124. Asn-123 contacts L-citrulline. 4 residues coordinate L-citrulline: Arg-127, Ser-175, Glu-260, and Tyr-272.

Belongs to the argininosuccinate synthase family. Type 1 subfamily. In terms of assembly, homotetramer.

It is found in the cytoplasm. The catalysed reaction is L-citrulline + L-aspartate + ATP = 2-(N(omega)-L-arginino)succinate + AMP + diphosphate + H(+). It functions in the pathway amino-acid biosynthesis; L-arginine biosynthesis; L-arginine from L-ornithine and carbamoyl phosphate: step 2/3. The protein is Argininosuccinate synthase of Rhodococcus erythropolis (strain PR4 / NBRC 100887).